Reading from the N-terminus, the 89-residue chain is MGDVAAKIKIMPESIETDLAELKEKIKAVIPAKADLHGDIVEEPIAFGLKALIVTLIVNDEEGGTEPAEEAFAKVSGVENVQVLEAYRI.

This sequence belongs to the EF-1-beta/EF-1-delta family.

Promotes the exchange of GDP for GTP in EF-1-alpha/GDP, thus allowing the regeneration of EF-1-alpha/GTP that could then be used to form the ternary complex EF-1-alpha/GTP/AAtRNA. The protein is Elongation factor 1-beta of Methanosarcina acetivorans (strain ATCC 35395 / DSM 2834 / JCM 12185 / C2A).